The following is a 641-amino-acid chain: Chaperone protein DnaK (641 aa).

A Phosphothreonine; by autocatalysis modification is found at T199. A compositionally biased stretch (polar residues) spans 603 to 613 (YTQQGGTAGSE). The segment at 603-641 (YTQQGGTAGSETHSHEKAGGSGGDDVVDAEFEEVRDDKR) is disordered. Over residues 627-641 (DVVDAEFEEVRDDKR) the composition is skewed to acidic residues.

This sequence belongs to the heat shock protein 70 family.

In terms of biological role, acts as a chaperone. The polypeptide is Chaperone protein DnaK (Methylococcus capsulatus (strain ATCC 33009 / NCIMB 11132 / Bath)).